The primary structure comprises 303 residues: uncharacterized protein (303 aa).

The region spanning 15-74 (ERIDKFLASTENDWSRTQVQQWVKDGQVVVNGSAVKANYKIQPGDQVTVTVPEPEALDVL) is the S4 RNA-binding domain. Asp138 is a catalytic residue.

This sequence belongs to the pseudouridine synthase RluA family.

The catalysed reaction is a uridine in RNA = a pseudouridine in RNA. This is an uncharacterized protein from Bacillus subtilis (strain 168).